A 509-amino-acid chain; its full sequence is MTQFVGAIDQGTTSSRFIVFDRHGAILAVAQKEHRQIYPRPGWVEHDPLEILANTQEVIGAALARANLTAADLAAVGITNQRETSLLWDRETGRPLCNALVWMDTRTDELVQRYRRDGGQDRFRDRTGLPLATYFSALKLRWILDNVDGARAQAESGRALFGTIDSWLAWNLTGGPDGGVHLTDVTNASRTMLMDLATCRWDDDLLATFGIPRACLPRIVASSDLHGTIRTPPLDGARLAGILGDQQAALVGQACFAPGEAKNTYGTGSFLLMNTGTEPVRSKAGLLTTLAYRFGDEPPRYALEGAIAITGALVQWLRDNLGLFDSAPEIEALARSVPDNGDVYIVPAFSGLYAPYWDDSARGVIAGLTRFSNRGHIARAALEATAYQLCDVVAAMEADSGIRLATLKTDGGMVANELLMQFQADMLGAPVVRPRITETTALGAAYAAGLAVGYWSGTQELRDNWGVDATWRPTMPAELRAHHQRSWKKAIGKSLGWIDRPQAAADDVG.

Position 12 (threonine 12) interacts with ADP. Positions 12, 13, and 14 each coordinate ATP. Threonine 12 is a binding site for sn-glycerol 3-phosphate. Arginine 16 serves as a coordination point for ADP. 4 residues coordinate sn-glycerol 3-phosphate: arginine 82, glutamate 83, tyrosine 134, and aspartate 245. Glycerol-binding residues include arginine 82, glutamate 83, tyrosine 134, aspartate 245, and glutamine 246. Threonine 267 and glycine 311 together coordinate ADP. ATP contacts are provided by threonine 267, glycine 311, glutamine 315, and glycine 412. 2 residues coordinate ADP: glycine 412 and asparagine 416.

The protein belongs to the FGGY kinase family.

The enzyme catalyses glycerol + ATP = sn-glycerol 3-phosphate + ADP + H(+). The protein operates within polyol metabolism; glycerol degradation via glycerol kinase pathway; sn-glycerol 3-phosphate from glycerol: step 1/1. With respect to regulation, inhibited by fructose 1,6-bisphosphate (FBP). In terms of biological role, key enzyme in the regulation of glycerol uptake and metabolism. Catalyzes the phosphorylation of glycerol to yield sn-glycerol 3-phosphate. The chain is Glycerol kinase from Rhizorhabdus wittichii (strain DSM 6014 / CCUG 31198 / JCM 15750 / NBRC 105917 / EY 4224 / RW1) (Sphingomonas wittichii).